Reading from the N-terminus, the 79-residue chain is Alpha-actitoxin-Ms11a-4 (79 aa).

The N-terminal stretch at 1–23 (MKVLVAVLVFALLMCMFVDIAES) is a signal peptide. The propeptide occupies 24 to 46 (RRRDNPEYPSGLRYDEEMGVFKR). 3 disulfides stabilise this stretch: Cys-47/Cys-61, Cys-54/Cys-67, and Cys-60/Cys-76. Position 78 is a tyrosine amide (Tyr-78).

The protein localises to the secreted. It localises to the nematocyst. In terms of biological role, alpha-toxins act on postsynaptic membranes, they bind to the nicotinic acetylcholine receptors (nAChR) and thus inhibit them. This toxin very weakly competes with alpha-bungarotoxin for binding to orthosteric sites on muscle-type T.carlifornicus (IC(50)=14.95 uM) and human alpha-7/CHRNA7 nAChRs (IC(50)&gt;45 uM). This is Alpha-actitoxin-Ms11a-4 from Metridium senile (Brown sea anemone).